The sequence spans 202 residues: Adapter protein MecA 2 (202 aa).

It belongs to the MecA family. As to quaternary structure, homodimer.

In terms of biological role, enables the recognition and targeting of unfolded and aggregated proteins to the ClpC protease or to other proteins involved in proteolysis. Acts negatively in the development of competence by binding ComK and recruiting it to the ClpCP protease. When overexpressed, inhibits sporulation. Also involved in Spx degradation by ClpC. The polypeptide is Adapter protein MecA 2 (mecA2) (Bacillus anthracis).